A 407-amino-acid polypeptide reads, in one-letter code: Probable 2,3-bisphosphoglycerate-independent phosphoglycerate mutase (407 aa).

Residues 175-200 (GSDAINDTDPQQVGKEPLEPKGENPN) are disordered.

It belongs to the BPG-independent phosphoglycerate mutase family. A-PGAM subfamily.

The enzyme catalyses (2R)-2-phosphoglycerate = (2R)-3-phosphoglycerate. Its pathway is carbohydrate degradation; glycolysis; pyruvate from D-glyceraldehyde 3-phosphate: step 3/5. Catalyzes the interconversion of 2-phosphoglycerate and 3-phosphoglycerate. The chain is Probable 2,3-bisphosphoglycerate-independent phosphoglycerate mutase from Aquifex aeolicus (strain VF5).